Reading from the N-terminus, the 396-residue chain is Elongation factor Tu (396 aa).

The tr-type G domain maps to K10–E206. Residues G19–T26 form a G1 region. A GTP-binding site is contributed by G19–T26. T26 lines the Mg(2+) pocket. A G2 region spans residues G60–N64. The tract at residues D81 to G84 is G3. Residues D81 to H85 and N136 to D139 each bind GTP. The G4 stretch occupies residues N136–D139. A G5 region spans residues S174 to K176.

This sequence belongs to the TRAFAC class translation factor GTPase superfamily. Classic translation factor GTPase family. EF-Tu/EF-1A subfamily. In terms of assembly, monomer.

The protein localises to the cytoplasm. The catalysed reaction is GTP + H2O = GDP + phosphate + H(+). Its function is as follows. GTP hydrolase that promotes the GTP-dependent binding of aminoacyl-tRNA to the A-site of ribosomes during protein biosynthesis. This is Elongation factor Tu from Burkholderia cenocepacia (strain HI2424).